A 31-amino-acid chain; its full sequence is Cytochrome b6-f complex subunit 6 (31 aa).

A helical membrane pass occupies residues 7 to 25 (YSGFLLAAPIPASAPFTGL).

This sequence belongs to the PetL family. As to quaternary structure, the 4 large subunits of the cytochrome b6-f complex are cytochrome b6, subunit IV (17 kDa polypeptide, PetD), cytochrome f and the Rieske protein, while the 4 small subunits are PetG, PetL, PetM and PetN. The complex functions as a dimer.

The protein localises to the plastid. Its subcellular location is the chloroplast thylakoid membrane. Functionally, component of the cytochrome b6-f complex, which mediates electron transfer between photosystem II (PSII) and photosystem I (PSI), cyclic electron flow around PSI, and state transitions. PetL is important for photoautotrophic growth as well as for electron transfer efficiency and stability of the cytochrome b6-f complex. This Huperzia lucidula (Shining clubmoss) protein is Cytochrome b6-f complex subunit 6.